The sequence spans 424 residues: Chitinase CLP (424 aa).

A signal peptide spans 1-18 (MSLHLLLAVSLCVALASS). Residues 43 to 405 (AATSLYTVPI…DEEKQRLGFS (363 aa)) form the Peptidase A1 domain. N-linked (GlcNAc...) asparagine glycosylation is found at Asn139, Asn345, and Asn419.

It belongs to the peptidase A1 family. In terms of tissue distribution, expressed in roots. Expressed at low levels in leaf sheaths, stems and flowers.

Its subcellular location is the secreted. The protein localises to the extracellular space. It is found in the apoplast. It catalyses the reaction Random endo-hydrolysis of N-acetyl-beta-D-glucosaminide (1-&gt;4)-beta-linkages in chitin and chitodextrins.. Its function is as follows. Chitinase that possesses antifungal activity. Inhibits the growth of the fungal pathogen Rhizoctonia solani by degrading the fungal cell wall. Does not possess inhibiting activity against fungal endo-1,4-beta-D-xylanases belonging to glycoside hydrolase family 10 (GH10) and family 11 (GH11). Involved in the regulation of plant growth by regulating the intracellular calcium ion concentration in roots. This is Chitinase CLP from Oryza sativa subsp. japonica (Rice).